A 37-amino-acid chain; its full sequence is Cytochrome b6-f complex subunit 5 (37 aa).

The chain crosses the membrane as a helical span at residues 5-25 (FLFGIVLGLIPITLAGLFVTA).

The protein belongs to the PetG family. The 4 large subunits of the cytochrome b6-f complex are cytochrome b6, subunit IV (17 kDa polypeptide, PetD), cytochrome f and the Rieske protein, while the 4 small subunits are PetG, PetL, PetM and PetN. The complex functions as a dimer.

The protein resides in the plastid thylakoid membrane. Its function is as follows. Component of the cytochrome b6-f complex, which mediates electron transfer between photosystem II (PSII) and photosystem I (PSI), cyclic electron flow around PSI, and state transitions. PetG is required for either the stability or assembly of the cytochrome b6-f complex. This is Cytochrome b6-f complex subunit 5 from Cuscuta reflexa (Southern Asian dodder).